The primary structure comprises 208 residues: Imidazoleglycerol-phosphate dehydratase (208 aa).

The protein belongs to the imidazoleglycerol-phosphate dehydratase family.

It is found in the cytoplasm. The catalysed reaction is D-erythro-1-(imidazol-4-yl)glycerol 3-phosphate = 3-(imidazol-4-yl)-2-oxopropyl phosphate + H2O. The protein operates within amino-acid biosynthesis; L-histidine biosynthesis; L-histidine from 5-phospho-alpha-D-ribose 1-diphosphate: step 6/9. The chain is Imidazoleglycerol-phosphate dehydratase from Arthrobacter sp. (strain FB24).